The chain runs to 431 residues: Histidine--tRNA ligase (431 aa).

It belongs to the class-II aminoacyl-tRNA synthetase family. Homodimer.

Its subcellular location is the cytoplasm. It catalyses the reaction tRNA(His) + L-histidine + ATP = L-histidyl-tRNA(His) + AMP + diphosphate + H(+). This Levilactobacillus brevis (strain ATCC 367 / BCRC 12310 / CIP 105137 / JCM 1170 / LMG 11437 / NCIMB 947 / NCTC 947) (Lactobacillus brevis) protein is Histidine--tRNA ligase.